The primary structure comprises 478 residues: UDP-glycosyltransferase 71B5 (478 aa).

Residues Ser-280, 347-349 (APQ), 364-372 (HCGWNSILE), and 386-389 (YAEQ) each bind UDP-alpha-D-glucose.

The protein belongs to the UDP-glycosyltransferase family.

In terms of biological role, possesses low quercetin 3-O-glucosyltransferase activity in vitro. The chain is UDP-glycosyltransferase 71B5 (UGT71B5) from Arabidopsis thaliana (Mouse-ear cress).